We begin with the raw amino-acid sequence, 265 residues long: MIKWPWKVQESAHQTALPWQEALSIPLLTCLTEQEQSKLVTLAERFLQQKRLVPLQGFELDSLRSCRIALLFCLPVLELGLEWLDGFHEVLIYPAPFVVDDEWEDDIGLVHNQRIVQSGQSWQQGPIVLNWLDIQDSFDASGFNLIIHEVAHKLDTRNGDRASGVPFIPLREVAGWEHDLHAAMNNIQEEIELVGENAASIDAYAASDPAECFAVLSEYFFSAPELFAPRFPSLWQRFCQFYQQDPLQRLHHANDTDSFSATNVH.

Positions 111, 148, 152, and 211 each coordinate Zn(2+).

Belongs to the MtfA family. As to quaternary structure, interacts with Mlc with high affinity. It depends on Zn(2+) as a cofactor.

It is found in the cytoplasm. With respect to regulation, proteolytic activity is stimulated by interaction with Mlc. Addition of the chelators EDTA or phenanthroline significantly reduces the peptidase activity, whereas the addition of other protease inhibitors has much less effect. In terms of biological role, involved in the modulation of the activity of the glucose-phosphotransferase system (glucose-PTS). Interacts with the transcriptional repressor Mlc, preventing its interaction with DNA and leading to the modulation of expression of genes regulated by Mlc, including ptsG, which encodes the PTS system glucose-specific EIICB component. Its function is as follows. Shows zinc-dependent metallopeptidase activity. In vitro, can cleave several artificial substrates. The greatest activity and specificity is observed for L-alanine fused to 4-nitroanilide (L-alanine-pNA). Shows significantly lower activity towards L-arginine-pNA, L-proline-pNA, hippuryl-L-phenylalanine and hippuryl-L-arginine, and cannot use FTC-casein. Mlc does not appear to be a biologically relevant peptidase substrate. Biologically relevant targets may have a function in growth transition under changing environmental conditions. The polypeptide is Mlc titration factor A (Escherichia coli (strain K12)).